Here is a 420-residue protein sequence, read N- to C-terminus: Exodeoxyribonuclease 7 large subunit (420 aa).

Belongs to the XseA family. As to quaternary structure, heterooligomer composed of large and small subunits.

It localises to the cytoplasm. The catalysed reaction is Exonucleolytic cleavage in either 5'- to 3'- or 3'- to 5'-direction to yield nucleoside 5'-phosphates.. Bidirectionally degrades single-stranded DNA into large acid-insoluble oligonucleotides, which are then degraded further into small acid-soluble oligonucleotides. This is Exodeoxyribonuclease 7 large subunit from Helicobacter pylori (strain HPAG1).